The following is a 445-amino-acid chain: Tubulin beta-7 chain (445 aa).

The GTP site is built by Gln11, Glu69, Ser138, Gly142, Thr143, Gly144, Asn204, and Asn226. Glu69 provides a ligand contact to Mg(2+). Positions 421–445 are disordered; sequence EYQQYQDATAEDEEYEEEEEEEEET. Over residues 429–445 the composition is skewed to acidic residues; the sequence is TAEDEEYEEEEEEEEET.

This sequence belongs to the tubulin family. In terms of assembly, dimer of alpha and beta chains. A typical microtubule is a hollow water-filled tube with an outer diameter of 25 nm and an inner diameter of 15 nM. Alpha-beta heterodimers associate head-to-tail to form protofilaments running lengthwise along the microtubule wall with the beta-tubulin subunit facing the microtubule plus end conferring a structural polarity. Microtubules usually have 13 protofilaments but different protofilament numbers can be found in some organisms and specialized cells. Mg(2+) is required as a cofactor.

The protein localises to the cytoplasm. Its subcellular location is the cytoskeleton. Tubulin is the major constituent of microtubules, a cylinder consisting of laterally associated linear protofilaments composed of alpha- and beta-tubulin heterodimers. Microtubules grow by the addition of GTP-tubulin dimers to the microtubule end, where a stabilizing cap forms. Below the cap, tubulin dimers are in GDP-bound state, owing to GTPase activity of alpha-tubulin. This chain is Tubulin beta-7 chain (TUBB7), found in Zea mays (Maize).